The following is a 507-amino-acid chain: Glycerol kinase (507 aa).

An ADP-binding site is contributed by Thr-15. ATP-binding residues include Thr-15, Thr-16, and Ser-17. Thr-15 is a binding site for sn-glycerol 3-phosphate. Residue Arg-19 coordinates ADP. Residues Arg-85, Glu-86, Tyr-137, and Asp-250 each contribute to the sn-glycerol 3-phosphate site. Glycerol is bound by residues Arg-85, Glu-86, Tyr-137, Asp-250, and Gln-251. ADP contacts are provided by Thr-272, Gly-316, and Gly-418. Thr-272, Gly-316, and Gly-418 together coordinate ATP.

It belongs to the FGGY kinase family.

It catalyses the reaction glycerol + ATP = sn-glycerol 3-phosphate + ADP + H(+). It participates in polyol metabolism; glycerol degradation via glycerol kinase pathway; sn-glycerol 3-phosphate from glycerol: step 1/1. Inhibited by fructose 1,6-bisphosphate (FBP). Its function is as follows. Key enzyme in the regulation of glycerol uptake and metabolism. Catalyzes the phosphorylation of glycerol to yield sn-glycerol 3-phosphate. The polypeptide is Glycerol kinase (Malacoplasma penetrans (strain HF-2) (Mycoplasma penetrans)).